We begin with the raw amino-acid sequence, 155 residues long: Ribosomal RNA large subunit methyltransferase H (155 aa).

S-adenosyl-L-methionine contacts are provided by residues Gly104 and 123–128 (FGNITL).

The protein belongs to the RNA methyltransferase RlmH family. Homodimer.

The protein resides in the cytoplasm. The catalysed reaction is pseudouridine(1915) in 23S rRNA + S-adenosyl-L-methionine = N(3)-methylpseudouridine(1915) in 23S rRNA + S-adenosyl-L-homocysteine + H(+). Its function is as follows. Specifically methylates the pseudouridine at position 1915 (m3Psi1915) in 23S rRNA. The sequence is that of Ribosomal RNA large subunit methyltransferase H from Mesoplasma florum (strain ATCC 33453 / NBRC 100688 / NCTC 11704 / L1) (Acholeplasma florum).